Here is a 300-residue protein sequence, read N- to C-terminus: Protein SPEAR2 (300 aa).

Residues 1–11 (MCSNNNTSSGS) are compositionally biased toward polar residues. Positions 1 to 64 (MCSNNNTSSG…PPLSSSPSLP (64 aa)) are disordered. Residues 25-38 (CRKKQKKDKVRRRG) show a composition bias toward basic residues. An SPL motif is present at residues 37-45 (RGPGVAELE). The span at 43–54 (ELEKIRLQEEYK) shows a compositional bias: basic and acidic residues. Low complexity predominate over residues 55-64 (PPLSSSPSLP). An EAR motif is present at residues 294 to 300 (IDLNLKL).

As to quaternary structure, homodimer and heterodimer with SPL and SPEARs. Interacts with SPL, SPEAR1, SPEAR3 and SPEAR4. Expressed in leaves.

In terms of biological role, adapter-like transcriptional repressor recruiting TPL/TPR corepressors to inhibit TCP transcription factors. May be involved in leaf development. In Arabidopsis thaliana (Mouse-ear cress), this protein is Protein SPEAR2.